The following is a 123-amino-acid chain: Large ribosomal subunit protein uL22 (123 aa).

It belongs to the universal ribosomal protein uL22 family. In terms of assembly, part of the 50S ribosomal subunit.

Functionally, this protein binds specifically to 23S rRNA; its binding is stimulated by other ribosomal proteins, e.g. L4, L17, and L20. It is important during the early stages of 50S assembly. It makes multiple contacts with different domains of the 23S rRNA in the assembled 50S subunit and ribosome. Its function is as follows. The globular domain of the protein is located near the polypeptide exit tunnel on the outside of the subunit, while an extended beta-hairpin is found that lines the wall of the exit tunnel in the center of the 70S ribosome. This chain is Large ribosomal subunit protein uL22, found in Synechococcus sp. (strain JA-3-3Ab) (Cyanobacteria bacterium Yellowstone A-Prime).